The following is a 440-amino-acid chain: Heat stress transcription factor A-4b (440 aa).

Residues 121–181 (NERKDYEEEI…QRSLISYVRE (61 aa)) are a coiled coil. The segment at 133 to 183 (LKSDNAALSSELQNNTLKKLNMEKRMQALEEKLFVVEDQQRSLISYVREIV) is hydrophobic repeat HR-A/B. A Nuclear export signal motif is present at residues 158–163 (MQALEE). The short motif at 200–204 (RKKRR) is the Nuclear localization signal element. The tract at residues 264–417 (DISYDDGVPG…EMKSGDRQHL (154 aa)) is disordered. Residues 295–305 (SPPTRMRTSSA) are compositionally biased toward polar residues. Positions 333–343 (SRVDTRAKVSE) are enriched in basic and acidic residues. An AHA motif is present at residues 375–384 (DGFWQQFLTE). Residues 380 to 390 (QFLTEQPGSSD) show a composition bias toward polar residues. Residues 391–417 (AHQEAQSERRDGGNKVDEMKSGDRQHL) show a composition bias toward basic and acidic residues.

This sequence belongs to the HSF family. Class A subfamily. Homotrimer. In terms of processing, exhibits temperature-dependent phosphorylation.

It is found in the cytoplasm. The protein localises to the nucleus. Its function is as follows. Transcriptional regulator that specifically binds DNA of heat shock promoter elements (HSE). The protein is Heat stress transcription factor A-4b (HSFA4B) of Oryza sativa subsp. japonica (Rice).